Reading from the N-terminus, the 195-residue chain is Shikimate kinase (195 aa).

ATP is bound at residue 21 to 26 (GTGKTS). Thr25 lines the Mg(2+) pocket. Positions 43, 67, and 89 each coordinate substrate. Positions 128–148 (REQRPSFSGKASTEISEETMR) are disordered. Arg131 is an ATP binding site. Positions 132 to 141 (PSFSGKASTE) are enriched in polar residues. Arg158 contacts substrate.

It belongs to the shikimate kinase family. As to quaternary structure, monomer. Mg(2+) is required as a cofactor.

The protein localises to the cytoplasm. It carries out the reaction shikimate + ATP = 3-phosphoshikimate + ADP + H(+). It functions in the pathway metabolic intermediate biosynthesis; chorismate biosynthesis; chorismate from D-erythrose 4-phosphate and phosphoenolpyruvate: step 5/7. Catalyzes the specific phosphorylation of the 3-hydroxyl group of shikimic acid using ATP as a cosubstrate. The chain is Shikimate kinase from Syntrophus aciditrophicus (strain SB).